Consider the following 94-residue polypeptide: Cell division topological specificity factor (94 aa).

It belongs to the MinE family.

Prevents the cell division inhibition by proteins MinC and MinD at internal division sites while permitting inhibition at polar sites. This ensures cell division at the proper site by restricting the formation of a division septum at the midpoint of the long axis of the cell. The polypeptide is Cell division topological specificity factor (Alkalilimnicola ehrlichii (strain ATCC BAA-1101 / DSM 17681 / MLHE-1)).